A 448-amino-acid polypeptide reads, in one-letter code: Probable glycine dehydrogenase (decarboxylating) subunit 1 (448 aa).

This sequence belongs to the GcvP family. N-terminal subunit subfamily. As to quaternary structure, the glycine cleavage system is composed of four proteins: P, T, L and H. In this organism, the P 'protein' is a heterodimer of two subunits.

It carries out the reaction N(6)-[(R)-lipoyl]-L-lysyl-[glycine-cleavage complex H protein] + glycine + H(+) = N(6)-[(R)-S(8)-aminomethyldihydrolipoyl]-L-lysyl-[glycine-cleavage complex H protein] + CO2. Functionally, the glycine cleavage system catalyzes the degradation of glycine. The P protein binds the alpha-amino group of glycine through its pyridoxal phosphate cofactor; CO(2) is released and the remaining methylamine moiety is then transferred to the lipoamide cofactor of the H protein. The protein is Probable glycine dehydrogenase (decarboxylating) subunit 1 of Listeria welshimeri serovar 6b (strain ATCC 35897 / DSM 20650 / CCUG 15529 / CIP 8149 / NCTC 11857 / SLCC 5334 / V8).